Consider the following 779-residue polypeptide: MSKVNTDENNFINNNNSNNNINNNDNNDNNNNNIQNVSNQIENGLLSNLPTISSSCESFSSKSHSLTERRSSIKNLLDNFSTLLDILEIPQLMDTCIKNNSFDEALQLESFAKKIYKQYSNNTVIIEIIKEIKVCTRSLISTLQQQLRQDITLTNCIKTIGYLRRLSIYKENELKIIFLHSRDQWLINSLKFDITNSNHVTYLTKLTDSCRTNIFDIVTQYNAIFSNESNDEDQLDDLILYNWIQQKIKVYINIVDSTLNHIKSGSSISYVLENSMYFSMSISRVGIDFRNLLEPIFEKHILNNFLSQITTANHHFLETLKTYKFPLQKSTSPTSSTTSTSSSSSSSSSSQYISPPLSILQHQPLAVLVNLILKSFNELKDCFPISLRSIVILKLKELIISIVGGVTSFYNQLLSNTISNLINSPSTTTTTTTTTITSSFDKVFHSFCKCLAEDFIPFIVKCFDIICSQQLQQQQQINDGSSSSSSSNSIGIDVDSLVLSLKKIYSTETQTIPSTQNNNLPPIPDLVLRGNKNSSPSTTTTPTTPTPTPTPTPTPTPTTPTTPTITHSTPPSPLPSSTTTQLNSNNNNNDNNNNNNNNNNNNNNNNNNNNNNNNNNNNNNNNNNNNNNNNNNNNNNNNNNTDKKVDERKEENIIKEEEQPISTSTANKNDIAIETITTPSSFSSSSSTNTKSDEEIIDKIVQPDPVVVEKQENEITNILKDDNETTTDILTDNNEATTEIQNNDQSLNPDPIIQEIEDTPSEVIVNNNNNNNDDDDTTF.

3 disordered regions span residues 1–36 (MSKV…NIQN), 328–349 (QKST…SSSS), and 512–691 (IPST…TNTK). 3 stretches are compositionally biased toward low complexity: residues 8 to 36 (ENNF…NIQN), 330 to 349 (STSP…SSSS), and 533 to 543 (NSSPSTTTTPT). The span at 544 to 560 (TPTPTPTPTPTPTPTTP) shows a compositional bias: pro residues. Over residues 561 to 640 (TTPTITHSTP…NNNNNNNNNN (80 aa)) the composition is skewed to low complexity. Residues 641-658 (TDKKVDERKEENIIKEEE) show a composition bias toward basic and acidic residues. The segment covering 675–690 (TITTPSSFSSSSSTNT) has biased composition (low complexity).

The protein belongs to the COG8 family. Component of the conserved oligomeric Golgi complex which is composed of eight different subunits and is required for normal Golgi morphology and localization.

Its subcellular location is the golgi apparatus membrane. In terms of biological role, required for normal Golgi function. This Dictyostelium discoideum (Social amoeba) protein is Conserved oligomeric Golgi complex subunit 8 (cog8).